The chain runs to 109 residues: ATP synthase subunit c (109 aa).

Helical transmembrane passes span 42-62 and 88-108; these read YIGT…QGFS and LALA…IIFV.

Belongs to the ATPase C chain family. As to quaternary structure, F-type ATPases have 2 components, F(1) - the catalytic core - and F(0) - the membrane proton channel. F(1) has five subunits: alpha(3), beta(3), gamma(1), delta(1), epsilon(1). F(0) has three main subunits: a(1), b(2) and c(10-14). The alpha and beta chains form an alternating ring which encloses part of the gamma chain. F(1) is attached to F(0) by a central stalk formed by the gamma and epsilon chains, while a peripheral stalk is formed by the delta and b chains.

The protein resides in the cell membrane. F(1)F(0) ATP synthase produces ATP from ADP in the presence of a proton or sodium gradient. F-type ATPases consist of two structural domains, F(1) containing the extramembraneous catalytic core and F(0) containing the membrane proton channel, linked together by a central stalk and a peripheral stalk. During catalysis, ATP synthesis in the catalytic domain of F(1) is coupled via a rotary mechanism of the central stalk subunits to proton translocation. Functionally, key component of the F(0) channel; it plays a direct role in translocation across the membrane. A homomeric c-ring of between 10-14 subunits forms the central stalk rotor element with the F(1) delta and epsilon subunits. The polypeptide is ATP synthase subunit c (Ureaplasma parvum serovar 3 (strain ATCC 27815 / 27 / NCTC 11736)).